The chain runs to 292 residues: Pantothenate synthetase (292 aa).

32–39 (MGFLHEGH) is an ATP binding site. His39 (proton donor) is an active-site residue. Position 63 (Gln63) interacts with (R)-pantoate. Beta-alanine is bound at residue Gln63. Position 150 to 153 (150 to 153 (GEKD)) interacts with ATP. Gln156 serves as a coordination point for (R)-pantoate. Residues Val179 and 187 to 190 (MSSR) contribute to the ATP site.

Belongs to the pantothenate synthetase family. As to quaternary structure, homodimer.

It is found in the cytoplasm. The enzyme catalyses (R)-pantoate + beta-alanine + ATP = (R)-pantothenate + AMP + diphosphate + H(+). It participates in cofactor biosynthesis; (R)-pantothenate biosynthesis; (R)-pantothenate from (R)-pantoate and beta-alanine: step 1/1. Functionally, catalyzes the condensation of pantoate with beta-alanine in an ATP-dependent reaction via a pantoyl-adenylate intermediate. This chain is Pantothenate synthetase, found in Myxococcus xanthus (strain DK1622).